The chain runs to 136 residues: Large ribosomal subunit protein uL16c (136 aa).

The protein belongs to the universal ribosomal protein uL16 family. As to quaternary structure, part of the 50S ribosomal subunit.

It localises to the plastid. Its subcellular location is the chloroplast. The protein is Large ribosomal subunit protein uL16c of Phaseolus angularis (Azuki bean).